Reading from the N-terminus, the 391-residue chain is Formate-dependent phosphoribosylglycinamide formyltransferase (391 aa).

Residues 20 to 21 and Glu-80 contribute to the N(1)-(5-phospho-beta-D-ribosyl)glycinamide site; that span reads EL. ATP-binding positions include Arg-112, Lys-153, 158–163, 193–196, and Glu-201; these read SSGKGQ and EGFI. The ATP-grasp domain occupies 117–306; that stretch reads RLAAETLGLP…EFALHVRAIL (190 aa). Glu-265 and Glu-277 together coordinate Mg(2+). Residues Asp-284, Lys-354, and 361-362 each bind N(1)-(5-phospho-beta-D-ribosyl)glycinamide; that span reads RR.

This sequence belongs to the PurK/PurT family. As to quaternary structure, homodimer.

The enzyme catalyses N(1)-(5-phospho-beta-D-ribosyl)glycinamide + formate + ATP = N(2)-formyl-N(1)-(5-phospho-beta-D-ribosyl)glycinamide + ADP + phosphate + H(+). It functions in the pathway purine metabolism; IMP biosynthesis via de novo pathway; N(2)-formyl-N(1)-(5-phospho-D-ribosyl)glycinamide from N(1)-(5-phospho-D-ribosyl)glycinamide (formate route): step 1/1. Functionally, involved in the de novo purine biosynthesis. Catalyzes the transfer of formate to 5-phospho-ribosyl-glycinamide (GAR), producing 5-phospho-ribosyl-N-formylglycinamide (FGAR). Formate is provided by PurU via hydrolysis of 10-formyl-tetrahydrofolate. The protein is Formate-dependent phosphoribosylglycinamide formyltransferase of Shewanella sp. (strain ANA-3).